The chain runs to 446 residues: ATP-dependent protease ATPase subunit HslU (446 aa).

ATP is bound by residues I18, 60–65, D259, E324, and R396; that span reads GVGKTE.

This sequence belongs to the ClpX chaperone family. HslU subfamily. In terms of assembly, a double ring-shaped homohexamer of HslV is capped on each side by a ring-shaped HslU homohexamer. The assembly of the HslU/HslV complex is dependent on binding of ATP.

It localises to the cytoplasm. ATPase subunit of a proteasome-like degradation complex; this subunit has chaperone activity. The binding of ATP and its subsequent hydrolysis by HslU are essential for unfolding of protein substrates subsequently hydrolyzed by HslV. HslU recognizes the N-terminal part of its protein substrates and unfolds these before they are guided to HslV for hydrolysis. The protein is ATP-dependent protease ATPase subunit HslU of Baumannia cicadellinicola subsp. Homalodisca coagulata.